Consider the following 119-residue polypeptide: Large ribosomal subunit protein uL18 (119 aa).

The protein belongs to the universal ribosomal protein uL18 family. Part of the 50S ribosomal subunit; part of the 5S rRNA/L5/L18/L25 subcomplex. Contacts the 5S and 23S rRNAs.

Its function is as follows. This is one of the proteins that bind and probably mediate the attachment of the 5S RNA into the large ribosomal subunit, where it forms part of the central protuberance. The sequence is that of Large ribosomal subunit protein uL18 from Nitratidesulfovibrio vulgaris (strain DP4) (Desulfovibrio vulgaris).